The chain runs to 503 residues: MVLEMLNPMHFNITTMVPAAMPAATMPILLLTCLLLLIWNYEGTSSIPGPGYCMGIGPLISYARFLWMGIGSACNYYNKMYGEFIRVWICGEETLIISKSSSMFHVMKHSHYVSRFGSKPGLQCIGMHENGIIFNNNPALWKVVRPFFMKALTGPGLVQMVAICVGSIGRHLDKLEEVTTRSGCVDVLTLMRRIMLDTSNTLFLGIPMDESAIVVKIQGYFDAWQALLLKPNIFFKISWLYKKYEKSVKDLKDAIDILVEKKRRRISTAEKLEDHMDFATNLIFAEKRGDLTRENVNQCVLEMLIAAPDTMSVSVFFMLFLIAKHPSVEEAIMEEIQTVVGERDIRIDDIQKLKVVENFIYESMRYQPVVDLVMRKALEDDVIDGYPVKKGTNIILNIGRMHRLEFFPKPNEFTLENFAKNVPYRYFQPFGFGPRGCAGKYIAMVMMKVILVTLLRRFQVKALQGRSVENIQKKNDLSLHPDETSDLLEMIFTPRNSDTCLGQ.

A heme-binding site is contributed by cysteine 437.

This sequence belongs to the cytochrome P450 family. Heme serves as cofactor.

It is found in the membrane. It carries out the reaction testosterone + 3 reduced [NADPH--hemoprotein reductase] + 3 O2 = 17beta-estradiol + formate + 3 oxidized [NADPH--hemoprotein reductase] + 4 H2O + 4 H(+). The catalysed reaction is androst-4-ene-3,17-dione + 3 reduced [NADPH--hemoprotein reductase] + 3 O2 = estrone + formate + 3 oxidized [NADPH--hemoprotein reductase] + 4 H2O + 4 H(+). Its function is as follows. Catalyzes the formation of aromatic C18 estrogens from C19 androgens. The polypeptide is Aromatase (CYP19A1) (Oryctolagus cuniculus (Rabbit)).